A 304-amino-acid polypeptide reads, in one-letter code: Fructose permease IIC component (304 aa).

The region spanning 1–304 (IHSADPKDPT…GIIKKPVEEK (304 aa)) is the PTS EIIC type-2 domain. The next 8 helical transmembrane spans lie at 20 to 40 (FIGS…FIAM), 62 to 82 (NAGF…VILL), 98 to 118 (PVLI…QFVI), 140 to 160 (NLVL…GGPL), 181 to 201 (AAIM…TTFF), 214 to 234 (ITCY…FAAA), 238 to 258 (VIPA…FFRV), and 277 to 297 (LLYL…LGII).

It localises to the cell membrane. In terms of biological role, the phosphoenolpyruvate-dependent sugar phosphotransferase system (PTS), a major carbohydrate active -transport system, catalyzes the phosphorylation of incoming sugar substrates concomitant with their translocation across the cell membrane. This system is involved in fructose transport. The chain is Fructose permease IIC component (fruA) from Bacillus amyloliquefaciens (Bacillus velezensis).